A 331-amino-acid polypeptide reads, in one-letter code: Ketol-acid reductoisomerase (NADP(+)) (331 aa).

The KARI N-terminal Rossmann domain occupies 2–182 (AKIYTDKDAS…GATRAGVIET (181 aa)). NADP(+) contacts are provided by residues 25 to 28 (YGIQ), R48, S53, and 83 to 86 (DMEQ). Residue H108 is part of the active site. G134 lines the NADP(+) pocket. Positions 183 to 328 (TFAEETETDL…AEMRKLLFGR (146 aa)) constitute a KARI C-terminal knotted domain. Positions 191, 195, 227, and 231 each coordinate Mg(2+). S252 is a substrate binding site.

This sequence belongs to the ketol-acid reductoisomerase family. The cofactor is Mg(2+).

The enzyme catalyses (2R)-2,3-dihydroxy-3-methylbutanoate + NADP(+) = (2S)-2-acetolactate + NADPH + H(+). It carries out the reaction (2R,3R)-2,3-dihydroxy-3-methylpentanoate + NADP(+) = (S)-2-ethyl-2-hydroxy-3-oxobutanoate + NADPH + H(+). It functions in the pathway amino-acid biosynthesis; L-isoleucine biosynthesis; L-isoleucine from 2-oxobutanoate: step 2/4. The protein operates within amino-acid biosynthesis; L-valine biosynthesis; L-valine from pyruvate: step 2/4. Functionally, involved in the biosynthesis of branched-chain amino acids (BCAA). Catalyzes an alkyl-migration followed by a ketol-acid reduction of (S)-2-acetolactate (S2AL) to yield (R)-2,3-dihydroxy-isovalerate. In the isomerase reaction, S2AL is rearranged via a Mg-dependent methyl migration to produce 3-hydroxy-3-methyl-2-ketobutyrate (HMKB). In the reductase reaction, this 2-ketoacid undergoes a metal-dependent reduction by NADPH to yield (R)-2,3-dihydroxy-isovalerate. The chain is Ketol-acid reductoisomerase (NADP(+)) from Pyrobaculum islandicum (strain DSM 4184 / JCM 9189 / GEO3).